Consider the following 61-residue polypeptide: DNA-directed RNA polymerase subunit Rpo6 (61 aa).

It belongs to the archaeal Rpo6/eukaryotic RPB6 RNA polymerase subunit family. In terms of assembly, part of the RNA polymerase complex.

The protein resides in the cytoplasm. It carries out the reaction RNA(n) + a ribonucleoside 5'-triphosphate = RNA(n+1) + diphosphate. Functionally, DNA-dependent RNA polymerase (RNAP) catalyzes the transcription of DNA into RNA using the four ribonucleoside triphosphates as substrates. This chain is DNA-directed RNA polymerase subunit Rpo6, found in Thermoplasma acidophilum (strain ATCC 25905 / DSM 1728 / JCM 9062 / NBRC 15155 / AMRC-C165).